Consider the following 500-residue polypeptide: Aspartyl/glutamyl-tRNA(Asn/Gln) amidotransferase subunit B (500 aa).

It belongs to the GatB/GatE family. GatB subfamily. Heterotrimer of A, B and C subunits.

It catalyses the reaction L-glutamyl-tRNA(Gln) + L-glutamine + ATP + H2O = L-glutaminyl-tRNA(Gln) + L-glutamate + ADP + phosphate + H(+). It carries out the reaction L-aspartyl-tRNA(Asn) + L-glutamine + ATP + H2O = L-asparaginyl-tRNA(Asn) + L-glutamate + ADP + phosphate + 2 H(+). Functionally, allows the formation of correctly charged Asn-tRNA(Asn) or Gln-tRNA(Gln) through the transamidation of misacylated Asp-tRNA(Asn) or Glu-tRNA(Gln) in organisms which lack either or both of asparaginyl-tRNA or glutaminyl-tRNA synthetases. The reaction takes place in the presence of glutamine and ATP through an activated phospho-Asp-tRNA(Asn) or phospho-Glu-tRNA(Gln). This is Aspartyl/glutamyl-tRNA(Asn/Gln) amidotransferase subunit B from Rhizobium johnstonii (strain DSM 114642 / LMG 32736 / 3841) (Rhizobium leguminosarum bv. viciae).